The following is a 445-amino-acid chain: Glycerophosphocholine choline phosphodiesterase ENPP6 (445 aa).

The first 22 residues, 1–22 (MAGKLGVLLLALVLSLAQPASA), serve as a signal peptide directing secretion. Residues D32, S71, and N92 each contribute to the substrate site. D32 and S71 together coordinate Zn(2+). The active-site Nucleophile is the S71. A Phosphoserine modification is found at S71. N100 and N118 each carry an N-linked (GlcNAc...) asparagine glycan. Cysteines 142 and 154 form a disulfide. D193 contacts substrate. Zn(2+)-binding residues include D193, H197, D240, and H241. Substrate is bound at residue H241. N-linked (GlcNAc...) asparagine glycosylation is present at N341. H356 provides a ligand contact to substrate. Zn(2+) is bound at residue H356. An N-linked (GlcNAc...) asparagine glycan is attached at N406. S421 carries the GPI-anchor amidated serine lipid modification. The propeptide at 422–445 (SAPGAPPCACALVTVLLVLLAILA) is removed in mature form.

This sequence belongs to the nucleotide pyrophosphatase/phosphodiesterase family. As to quaternary structure, homodimer; disulfide-linked. Homotetramer. The cofactor is Zn(2+).

It is found in the cell membrane. It carries out the reaction sn-glycerol 3-phosphocholine + H2O = phosphocholine + glycerol + H(+). It catalyses the reaction a 1-acyl-sn-glycero-3-phosphocholine + H2O = a 1-acyl-sn-glycerol + phosphocholine + H(+). The catalysed reaction is a 1-O-alkyl-sn-glycero-3-phosphocholine + H2O = a 1-O-alkyl-sn-glycerol + phosphocholine + H(+). The enzyme catalyses 1-dodecanoyl-sn-glycero-3-phosphocholine + H2O = 1-dodecanoyl-sn-glycerol + phosphocholine + H(+). It carries out the reaction 1-hexadecanoyl-sn-glycero-3-phosphocholine + H2O = 1-hexadecanoyl-sn-glycerol + phosphocholine + H(+). It catalyses the reaction 1-(5Z,8Z,11Z,14Z-eicosatetraenoyl)-sn-glycero-3-phosphocholine + H2O = 1-(5Z,8Z,11Z,14Z-eicosatetraenoyl)-sn-glycerol + phosphocholine + H(+). The catalysed reaction is 1-tetradecanoyl-sn-glycero-3-phosphocholine + H2O = 1-tetradecanoyl-sn-glycerol + phosphocholine + H(+). The enzyme catalyses sphing-4-enine-phosphocholine + H2O = sphing-4-enine + phosphocholine + H(+). It carries out the reaction 1-(9Z-octadecenoyl)-sn-glycero-3-phosphocholine + H2O = 1-(9Z-octadecenoyl)-sn-glycerol + phosphocholine + H(+). It catalyses the reaction 1-(9Z,12Z)-octadecadienoyl-sn-glycero-3-phosphocholine + H2O = 1-(9Z,12Z-octadecadienoyl)-sn-glycerol + phosphocholine + H(+). The catalysed reaction is glycero-2-phosphocholine + H2O = phosphocholine + glycerol + H(+). With respect to regulation, inhibited by EDTA and EGTA in vitro. Functionally, choline-specific glycerophosphodiesterase that hydrolyzes glycerophosphocholine (GPC) and lysophosphatidylcholine (LPC) and contributes to supplying choline to the cells. Has a preference for LPC with short (12:0 and 14:0) or polyunsaturated (18:2 and 20:4) fatty acids. In vitro, hydrolyzes only choline-containing lysophospholipids, such as sphingosylphosphorylcholine (SPC), platelet-activating factor (PAF) and lysoPAF, but not other lysophospholipids. The polypeptide is Glycerophosphocholine choline phosphodiesterase ENPP6 (Bos taurus (Bovine)).